The following is an 883-amino-acid chain: Valine--tRNA ligase (883 aa).

The short motif at 46 to 56 (PNVTGKLHLGH) is the 'HIGH' region element. The 'KMSKS' region motif lies at 520 to 524 (KMSKS). Lys-523 is a binding site for ATP. Residues 809–844 (LVDLLNVEEELARLEKELAKWQKELDMVGKKLSNER) are a coiled coil.

The protein belongs to the class-I aminoacyl-tRNA synthetase family. ValS type 1 subfamily. As to quaternary structure, monomer.

The protein localises to the cytoplasm. It catalyses the reaction tRNA(Val) + L-valine + ATP = L-valyl-tRNA(Val) + AMP + diphosphate. Functionally, catalyzes the attachment of valine to tRNA(Val). As ValRS can inadvertently accommodate and process structurally similar amino acids such as threonine, to avoid such errors, it has a 'posttransfer' editing activity that hydrolyzes mischarged Thr-tRNA(Val) in a tRNA-dependent manner. This chain is Valine--tRNA ligase, found in Streptococcus pneumoniae (strain ATCC BAA-255 / R6).